The primary structure comprises 467 residues: Cysteine--tRNA ligase (467 aa).

Residue C30 participates in Zn(2+) binding. Positions 32–42 (PTVYDDSHLGH) match the 'HIGH' region motif. C209, H239, and E243 together coordinate Zn(2+). The short motif at 271–275 (KMSKS) is the 'KMSKS' region element. An ATP-binding site is contributed by K274.

Belongs to the class-I aminoacyl-tRNA synthetase family. In terms of assembly, monomer. Zn(2+) is required as a cofactor.

It is found in the cytoplasm. The enzyme catalyses tRNA(Cys) + L-cysteine + ATP = L-cysteinyl-tRNA(Cys) + AMP + diphosphate. The sequence is that of Cysteine--tRNA ligase from Aliarcobacter butzleri (strain RM4018) (Arcobacter butzleri).